The following is a 1798-amino-acid chain: DNA polymerase II large subunit (1798 aa).

The disordered stretch occupies residues 286–309 (EKGKSSEENKDESKAEDTGTESVA). One can recognise a DOD-type homing endonuclease domain in the interval 1184–1319 (VVGYYLAEGY…ETLLLAKFGI (136 aa)). Residues 1699–1798 (TGHSNGKNGY…GISLDEFFGS (100 aa)) are disordered. Low complexity predominate over residues 1714-1731 (GKNGKASKKSGSLASKLS). The segment covering 1733–1753 (KGKEPSKKKESAKPKRSEKVK) has biased composition (basic and acidic residues).

It belongs to the archaeal DNA polymerase II family. In terms of assembly, heterodimer of a large subunit and a small subunit. This protein undergoes a protein self splicing that involves a post-translational excision of the intervening region (intein) followed by peptide ligation.

It carries out the reaction DNA(n) + a 2'-deoxyribonucleoside 5'-triphosphate = DNA(n+1) + diphosphate. The enzyme catalyses Exonucleolytic cleavage in the 3'- to 5'-direction to yield nucleoside 5'-phosphates.. Possesses two activities: a DNA synthesis (polymerase) and an exonucleolytic activity that degrades single-stranded DNA in the 3'- to 5'-direction. Has a template-primer preference which is characteristic of a replicative DNA polymerase. The chain is DNA polymerase II large subunit (polC) from Thermococcus kodakarensis (strain ATCC BAA-918 / JCM 12380 / KOD1) (Pyrococcus kodakaraensis (strain KOD1)).